A 542-amino-acid polypeptide reads, in one-letter code: Chaperonin GroEL 2 (542 aa).

ATP contacts are provided by residues 30–33 (TLGP), Lys-51, 87–91 (DGTTT), Gly-415, and Asp-496.

Belongs to the chaperonin (HSP60) family. Forms a cylinder of 14 subunits composed of two heptameric rings stacked back-to-back. Interacts with the co-chaperonin GroES.

The protein localises to the cytoplasm. It catalyses the reaction ATP + H2O + a folded polypeptide = ADP + phosphate + an unfolded polypeptide.. Together with its co-chaperonin GroES, plays an essential role in assisting protein folding. The GroEL-GroES system forms a nano-cage that allows encapsulation of the non-native substrate proteins and provides a physical environment optimized to promote and accelerate protein folding. This chain is Chaperonin GroEL 2, found in Rhizobium meliloti (strain 1021) (Ensifer meliloti).